The following is a 167-amino-acid chain: Shikimate kinase (167 aa).

An ATP-binding site is contributed by 12-17 (GSGKTT). Threonine 16 is a Mg(2+) binding site. Residues aspartate 34, arginine 58, and glycine 80 each coordinate substrate. ATP is bound at residue arginine 117. Arginine 135 provides a ligand contact to substrate. Arginine 152 lines the ATP pocket.

The protein belongs to the shikimate kinase family. In terms of assembly, monomer. It depends on Mg(2+) as a cofactor.

It localises to the cytoplasm. It catalyses the reaction shikimate + ATP = 3-phosphoshikimate + ADP + H(+). It functions in the pathway metabolic intermediate biosynthesis; chorismate biosynthesis; chorismate from D-erythrose 4-phosphate and phosphoenolpyruvate: step 5/7. In terms of biological role, catalyzes the specific phosphorylation of the 3-hydroxyl group of shikimic acid using ATP as a cosubstrate. In Salinispora tropica (strain ATCC BAA-916 / DSM 44818 / JCM 13857 / NBRC 105044 / CNB-440), this protein is Shikimate kinase.